Here is a 1075-residue protein sequence, read N- to C-terminus: Nuclear factor of activated T-cells, cytoplasmic 3 (1075 aa).

T2 is subject to N-acetylthreonine. Residues 18-37 are disordered; sequence FGEDGAPAPPPPGSRPADLE. The segment at 109–114 is calcineurin-binding; sequence PSIQIT. The tract at residues 205–306 is disordered; that stretch reads LGSPLTSPGG…PGHSPRGSVT (102 aa). 2 consecutive repeat copies span residues 207–223 and 236–252. The 3 X SP repeats stretch occupies residues 207 to 308; that stretch reads SPLTSPGGSP…HSPRGSVTED (102 aa). Residues 236–253 show a composition bias toward polar residues; the sequence is SPRQSPCHSPRSSVTDEN. A compositionally biased stretch (low complexity) spans 256–270; that stretch reads SPRPASGPSSRPTSP. Residues 273–275 carry the Nuclear localization signal motif; it reads KRR. The stretch at 292–308 is repeat 3; the sequence is SPVPSPGHSPRGSVTED. 2 positions are modified to phosphoserine: S344 and S372. In terms of domain architecture, RHD spans 415–596; the sequence is SSLPPLDWPL…IPVECSQRSA (182 aa). Residues 444-451 mediate DNA binding; sequence RAHYETEG. A Nuclear localization signal motif is present at residues 686 to 688; that stretch reads KRK. Disordered regions lie at residues 711 to 739 and 887 to 988; these read DLSS…SHDS and SNTG…GLSA. Composition is skewed to polar residues over residues 724 to 739 and 887 to 912; these read AQTQ…SHDS and SNTG…QLQP. Composition is skewed to low complexity over residues 916–939 and 949–967; these read GPSH…SSPL and PMPY…SPAT. The segment covering 970-981 has biased composition (polar residues); it reads HSGQHSTQAQST. Residues 1032 to 1041 carry the Nuclear export signal motif; sequence TLDDVNEIIG. Residues 1049–1075 form a disordered region; sequence VSQGAGVSRQAPLPSPESLDLGRSDGL. A phosphoserine mark is found at S1063 and S1066.

As to quaternary structure, NFATC proteins bind to DNA as monomers. Member of the multicomponent NFATC transcription complex that consists of at least two components, a pre-existing cytoplasmic component NFATC2 and an inducible nuclear component NFATC1. Other members such as NFATC4, or members of the activating protein-1 family, MAF, GATA4 and Cbp/p300 can also bind the complex. Component of a promoter-binding complex composed of STAT3, NFATC3 and NFATC4; complex formation is enhanced by calcineurin. Interacts with TRIM17; this interaction prevents NFATC3 nuclear localization. Interacts with and ubiquitinated by STUB1/CHIP; HSPA1A/HSP70 is required as a co-chaperone. In terms of processing, ubiquitinated by STUB1/CHIP, leading to proteasomal degradation. Phosphorylated by NFATC-kinase; dephosphorylated by calcineurin. Predominantly expressed in thymus and is also found in peripheral blood leukocytes and kidney. As to expression, predominantly expressed in skeletal muscle. Also found weakly expressed in the thymus, kidney, testis, spleen, prostate, ovary, small intestine, heart, placenta and pancreas. In terms of tissue distribution, expressed in thymus and kidney. Expressed in thymus and skeletal muscle.

The protein resides in the cytoplasm. It is found in the nucleus. Acts as a regulator of transcriptional activation. Binds to the TNFSF11/RANKL promoter region and promotes TNFSF11 transcription. Binding to the TNFSF11 promoter region is increased by high levels of Ca(2+) which induce NFATC3 expression and may lead to regulation of TNFSF11 expression in osteoblasts. Plays a role in promoting mesenteric arterial wall remodeling in response to the intermittent hypoxia-induced increase in EDN1 and ROCK signaling. As a result NFATC3 colocalizes with F-actin filaments, translocates to the nucleus and promotes transcription of the smooth muscle hypertrophy and differentiation marker ACTA2. Promotes lipopolysaccharide-induced apoptosis and hypertrophy in cardiomyocytes. Following JAK/STAT signaling activation and as part of a complex with NFATC4 and STAT3, binds to the alpha-beta E4 promoter region of CRYAB and activates transcription in cardiomyocytes. In conjunction with NFATC4, involved in embryonic heart development via maintenance of cardiomyocyte survival, proliferation and differentiation. Plays a role in the inducible expression of cytokine genes in T-cells, especially in the induction of the IL-2. Required for thymocyte maturation during DN3 to DN4 transition and during positive selection. Positively regulates macrophage-derived polymicrobial clearance, via binding to the promoter region and promoting transcription of NOS2 resulting in subsequent generation of nitric oxide. Involved in Ca(2+)-mediated transcriptional responses upon Ca(2+) influx via ORAI1 CRAC channels. The chain is Nuclear factor of activated T-cells, cytoplasmic 3 from Homo sapiens (Human).